The following is a 292-amino-acid chain: Elongation factor Ts (292 aa).

Residues Thr-80–Val-83 form an involved in Mg(2+) ion dislocation from EF-Tu region.

The protein belongs to the EF-Ts family.

The protein resides in the cytoplasm. Its function is as follows. Associates with the EF-Tu.GDP complex and induces the exchange of GDP to GTP. It remains bound to the aminoacyl-tRNA.EF-Tu.GTP complex up to the GTP hydrolysis stage on the ribosome. In Ralstonia pickettii (strain 12J), this protein is Elongation factor Ts.